The following is a 473-amino-acid chain: MASKTYTAGVKDYRETYWEPDYKIKDSDLLAVFKVTPQPGVDREEAAAAVAAESSTGTWTTVWTDLLTDLEHYKGRAYKVEDVPGDDEAFYAFIAYPIDLFEEGSIVNVFTSLVGNVFGFKAVRALRLEDVRFPLHFVMTCPGPPNGIQVERDKMNKYGRPLLGCTIKPKLGLSAKNYGRAVYECLRGGLDFTKDDENVNSQPFMRWRDRFEFVMEAIQKAEEETGERKGHYLNVTAPTPEEMYKRAEFAKELGAPIIMHDYITAGFCAHQGLANWCRDNGMLLHIHRAMHAVLDRNPNHGIHFRVLTKILRLMGGDQLHTGTVVGKLEGDRQSTLGWIDLLRKPYIEEDRSRGLFFDQDWGAMPGAFAVASGGIHVWHMPALLSIFGDDAVFQFGGGTLGHPWGNAAGAAANRVALEACVKARNEGRELEKEGKEILTEAAKSSPELKAAMETWKEIKFEFDTVDKLDTAHR.

Positions 116 and 166 each coordinate substrate. Lysine 168 serves as the catalytic Proton acceptor. Lysine 170 is a binding site for substrate. The Mg(2+) site is built by lysine 194, aspartate 196, and glutamate 197. An N6-carboxylysine modification is found at lysine 194. Catalysis depends on histidine 287, which acts as the Proton acceptor. 3 residues coordinate substrate: arginine 288, histidine 320, and serine 372.

This sequence belongs to the RuBisCO large chain family. Type I subfamily. Heterohexadecamer of 8 large chains and 8 small chains. The cofactor is Mg(2+).

The enzyme catalyses 2 (2R)-3-phosphoglycerate + 2 H(+) = D-ribulose 1,5-bisphosphate + CO2 + H2O. It catalyses the reaction D-ribulose 1,5-bisphosphate + O2 = 2-phosphoglycolate + (2R)-3-phosphoglycerate + 2 H(+). RuBisCO catalyzes two reactions: the carboxylation of D-ribulose 1,5-bisphosphate, the primary event in carbon dioxide fixation, as well as the oxidative fragmentation of the pentose substrate. Both reactions occur simultaneously and in competition at the same active site. The chain is Ribulose bisphosphate carboxylase large chain from Halorhodospira halophila (strain DSM 244 / SL1) (Ectothiorhodospira halophila (strain DSM 244 / SL1)).